Here is a 187-residue protein sequence, read N- to C-terminus: Transcription antitermination protein NusB (187 aa).

The interval 135-187 (APAPESVAEEADEESSDSDAAASDPTDEGDVSDSSGASDEPAAPSAEIQPTVD) is disordered. The span at 141–151 (VAEEADEESSD) shows a compositional bias: acidic residues.

This sequence belongs to the NusB family.

In terms of biological role, involved in transcription antitermination. Required for transcription of ribosomal RNA (rRNA) genes. Binds specifically to the boxA antiterminator sequence of the ribosomal RNA (rrn) operons. This Bifidobacterium longum subsp. infantis (strain ATCC 15697 / DSM 20088 / JCM 1222 / NCTC 11817 / S12) protein is Transcription antitermination protein NusB.